The following is a 231-amino-acid chain: Ribonuclease 3 (231 aa).

Positions 3–130 (MHEFFENFGI…VTAAIYLDQT (128 aa)) constitute an RNase III domain. A Mg(2+)-binding site is contributed by Glu43. Residue Asp47 is part of the active site. Mg(2+) is bound by residues Asp116 and Glu119. The active site involves Glu119. Positions 157–228 (DYKSELQEII…AKDCLNKLKK (72 aa)) constitute a DRBM domain.

This sequence belongs to the ribonuclease III family. As to quaternary structure, homodimer. The cofactor is Mg(2+).

The protein localises to the cytoplasm. The enzyme catalyses Endonucleolytic cleavage to 5'-phosphomonoester.. Functionally, digests double-stranded RNA. Involved in the processing of primary rRNA transcript to yield the immediate precursors to the large and small rRNAs (23S and 16S). Processes some mRNAs, and tRNAs when they are encoded in the rRNA operon. Processes pre-crRNA and tracrRNA of type II CRISPR loci if present in the organism. The polypeptide is Ribonuclease 3 (Mesoplasma florum (strain ATCC 33453 / NBRC 100688 / NCTC 11704 / L1) (Acholeplasma florum)).